We begin with the raw amino-acid sequence, 120 residues long: Ubiquitin domain-containing protein TINCR (120 aa).

In terms of domain architecture, Ubiquitin-like spans 14 to 83; it reads YHIKVHLADE…LQDGSVLLLV (70 aa).

As to expression, detected in stratum corneum (at protein level).

In Homo sapiens (Human), this protein is Ubiquitin domain-containing protein TINCR.